The following is a 632-amino-acid chain: tRNA uridine 5-carboxymethylaminomethyl modification enzyme MnmG (632 aa).

FAD contacts are provided by residues 15–20, isoleucine 127, and serine 182; that span reads GAGHAG. 276-290 is a binding site for NAD(+); the sequence is GPRYCPSIEDKIVRF. Glutamine 373 contacts FAD.

Belongs to the MnmG family. As to quaternary structure, homodimer. Heterotetramer of two MnmE and two MnmG subunits. FAD is required as a cofactor.

The protein resides in the cytoplasm. Functionally, NAD-binding protein involved in the addition of a carboxymethylaminomethyl (cmnm) group at the wobble position (U34) of certain tRNAs, forming tRNA-cmnm(5)s(2)U34. This chain is tRNA uridine 5-carboxymethylaminomethyl modification enzyme MnmG, found in Streptococcus pyogenes serotype M4 (strain MGAS10750).